We begin with the raw amino-acid sequence, 345 residues long: Dihydroorotase (345 aa).

2 residues coordinate Zn(2+): His13 and His15. Residues 15-17 (HFR) and Asn41 each bind substrate. The Zn(2+) site is built by Lys98, His135, and His173. The residue at position 98 (Lys98) is an N6-carboxylysine. A substrate-binding site is contributed by His135. Residue Leu218 participates in substrate binding. Asp246 provides a ligand contact to Zn(2+). Asp246 is a catalytic residue. His250 and Ala262 together coordinate substrate.

It belongs to the metallo-dependent hydrolases superfamily. DHOase family. Class II DHOase subfamily. As to quaternary structure, homodimer. It depends on Zn(2+) as a cofactor.

It carries out the reaction (S)-dihydroorotate + H2O = N-carbamoyl-L-aspartate + H(+). Its pathway is pyrimidine metabolism; UMP biosynthesis via de novo pathway; (S)-dihydroorotate from bicarbonate: step 3/3. Its function is as follows. Catalyzes the reversible cyclization of carbamoyl aspartate to dihydroorotate. The polypeptide is Dihydroorotase (Shewanella pealeana (strain ATCC 700345 / ANG-SQ1)).